The following is a 718-amino-acid chain: MTKLAQWMFEQYVKDLNLNNRGSPSFRKWLTLQPSLLRYSGVMRANAFDILKYGYPMQQSGYTVATLEIHFKNIRSSFANIYWNRDSEEPEYVCCCATYQSHDGEYRYRFVWYQPFIEAYNAIETALDPLETIILNLIAARDLDFVVHIFPYNKGHEDYLASTQLILKIFIATLLMDILRIKDNTLDVHLNSDYIIVMERLWPHIKDAIEHFFEAHKDLLGYLIAFRNGGNFAGSLRPSCGQKIVPLTIREALQINDINLAVWREVFIMQECSDLVINGIAPCFPIFNTWTYLQGINQIFFENTSLQEKFKKDFIARELSKEIIKGQKNLNDKEFKKLSLHQIQYMESFLLMSDVAIMITTEYVGYTLQSLPGIISRSSYVSPIVKNILTDEDSFMSLLFDLCYGAYVLHKKENVIHADLHLNNMTYYHFNPTSFTDRNKPGKYTLKVNNPVIAFITGPKVETETYVFKHIDGFGCIIDFSRAIMGPNHAIKLERQYGLAFVNTFYRNQSEHILKVLRYYFPEMLTNRENEIQGVILSNFNFFFNSITAIDFYAIARNLRSMLSLDYLHTSEVKRNVEISQTFLDTCQFLEEKAVEFLFKNLHTVISGKPVEKTAGDVLLPIVFKKFLYPNIPKNILRSFTVIDVYNYNNIKRYSGKAIQTFPPWAQTKEILTHAEGRTFEDIFPRGELVFKKAYAENNYLDKILQRIREQLANENLR.

Belongs to the asfivirus C717R family.

Its subcellular location is the virion. This is an uncharacterized protein from African swine fever virus (isolate Pig/Kenya/KEN-50/1950) (ASFV).